A 67-amino-acid polypeptide reads, in one-letter code: Small ribosomal subunit protein eS31 (67 aa).

Residues Cys31, Cys34, Cys49, and Cys52 each contribute to the Zn(2+) site. Residues 31 to 52 (CPKCGAGVFMAEHLNRFACGKC) form a C4-type zinc finger.

The protein belongs to the eukaryotic ribosomal protein eS31 family. In terms of assembly, part of the 30S ribosomal subunit. Zn(2+) serves as cofactor.

This chain is Small ribosomal subunit protein eS31, found in Methanococcus maripaludis (strain C5 / ATCC BAA-1333).